The following is a 335-amino-acid chain: Protein-lysine N-methyltransferase EEF2KMT (335 aa).

At methionine 1 the chain carries N-acetylmethionine. S-adenosyl-L-methionine contacts are provided by residues tryptophan 139, 165-167, tryptophan 228, and alanine 247; that span reads GSG.

The protein belongs to the class I-like SAM-binding methyltransferase superfamily. EEF2KMT family. In terms of assembly, interacts with FAM86B2 and FAM86C1P.

The protein localises to the cytoplasm. It catalyses the reaction L-lysyl-[protein] + 3 S-adenosyl-L-methionine = N(6),N(6),N(6)-trimethyl-L-lysyl-[protein] + 3 S-adenosyl-L-homocysteine + 3 H(+). Catalyzes the trimethylation of eukaryotic elongation factor 2 (EEF2) on 'Lys-525'. The protein is Protein-lysine N-methyltransferase EEF2KMT (Eef2kmt) of Mus musculus (Mouse).